A 205-amino-acid chain; its full sequence is MPLIPMVVEQSNRGERAYDIYSRLLKDRIIFLGSAMDDEVANLIVAQLLFLESEDPEKDINFYINSPGGVVTAGMAVYDTMQYIKPDVATVCIGQAASMGALLLAAGAKGKRFSLPNSRIMIHQPLGGAQGQASDIKIQANEILRMKEVLSGILSKHTGQNFDKISEDTDRDFFMSGDQAKEYGLVDHVVASRDELEKAEAAKEK.

The active-site Nucleophile is the Ser98. Residue His123 is part of the active site.

This sequence belongs to the peptidase S14 family. Fourteen ClpP subunits assemble into 2 heptameric rings which stack back to back to give a disk-like structure with a central cavity, resembling the structure of eukaryotic proteasomes.

It is found in the cytoplasm. The catalysed reaction is Hydrolysis of proteins to small peptides in the presence of ATP and magnesium. alpha-casein is the usual test substrate. In the absence of ATP, only oligopeptides shorter than five residues are hydrolyzed (such as succinyl-Leu-Tyr-|-NHMec, and Leu-Tyr-Leu-|-Tyr-Trp, in which cleavage of the -Tyr-|-Leu- and -Tyr-|-Trp bonds also occurs).. Cleaves peptides in various proteins in a process that requires ATP hydrolysis. Has a chymotrypsin-like activity. Plays a major role in the degradation of misfolded proteins. The polypeptide is ATP-dependent Clp protease proteolytic subunit (Desulforapulum autotrophicum (strain ATCC 43914 / DSM 3382 / VKM B-1955 / HRM2) (Desulfobacterium autotrophicum)).